A 667-amino-acid chain; its full sequence is tRNA 5-methylaminomethyl-2-thiouridine biosynthesis bifunctional protein MnmC (667 aa).

The interval 1–241 is tRNA (mnm(5)s(2)U34)-methyltransferase; sequence MHKLTFAQLS…KREMLCGEKA (241 aa). The interval 268–667 is FAD-dependent cmnm(5)s(2)U34 oxidoreductase; that stretch reads VGGGIASLFV…RKWLKGSKVV (400 aa).

The protein in the N-terminal section; belongs to the methyltransferase superfamily. tRNA (mnm(5)s(2)U34)-methyltransferase family. This sequence in the C-terminal section; belongs to the DAO family. It depends on FAD as a cofactor.

Its subcellular location is the cytoplasm. It catalyses the reaction 5-aminomethyl-2-thiouridine(34) in tRNA + S-adenosyl-L-methionine = 5-methylaminomethyl-2-thiouridine(34) in tRNA + S-adenosyl-L-homocysteine + H(+). In terms of biological role, catalyzes the last two steps in the biosynthesis of 5-methylaminomethyl-2-thiouridine (mnm(5)s(2)U) at the wobble position (U34) in tRNA. Catalyzes the FAD-dependent demodification of cmnm(5)s(2)U34 to nm(5)s(2)U34, followed by the transfer of a methyl group from S-adenosyl-L-methionine to nm(5)s(2)U34, to form mnm(5)s(2)U34. The protein is tRNA 5-methylaminomethyl-2-thiouridine biosynthesis bifunctional protein MnmC of Haemophilus ducreyi (strain 35000HP / ATCC 700724).